The sequence spans 3177 residues: Proliferation marker protein Ki-67 (3177 aa).

The FHA domain maps to 27–76; sequence CLFGRSIECDIRIQLPVVSKRHCKIEVKEQEAILYNFSSTNPTQVNGVTI. Basic and acidic residues-rich tracts occupy residues 98–107 and 116–126; these read EDGNHEDGSK and LGKEPSRRASR. Disordered stretches follow at residues 98–442 and 473–572; these read EDGN…PGLS and RPEL…ASIS. S125, S128, and S162 each carry phosphoserine. 2 stretches are compositionally biased toward polar residues: residues 165–177 and 202–221; these read SDGS…QDSS and STGS…LSNS. Residues 235-263 show a composition bias toward basic and acidic residues; sequence MKEELDVKSQKSCRKSEPQPDRAAEESRE. K236 participates in a covalent cross-link: Glycyl lysine isopeptide (Lys-Gly) (interchain with G-Cter in SUMO2). S250, S276, S277, S286, and S287 each carry phosphoserine. Positions 276 to 286 are enriched in polar residues; sequence SSGSTPVTAAS. T307 and T316 each carry phosphothreonine. Phosphoserine occurs at positions 321, 337, 373, 498, 503, and 588. The interval 455–618 is positively charged patch (CP); the sequence is KSEGMPMKRR…VKQTQTKVAK (164 aa). The 48-residue stretch at 462-509 folds into the PP1-binding domain; it reads KRRRVSFGGHLRPELFDENLPPNTPLKRGETPTKRKSLGTHSPAVLKT. The interval 614–652 is disordered; it reads TKVAKHVPQKQTSKRQRRPSTPKKPTSNLHNQFTTGHAN. Residues 616–634 show a composition bias toward basic residues; that stretch reads VAKHVPQKQTSKRQRRPST. Positions 636–652 are enriched in polar residues; that stretch reads KKPTSNLHNQFTTGHAN. Position 701 is a phosphothreonine (T701). Disordered regions lie at residues 793-815, 835-901, and 956-989; these read LEKK…SKLR, VLAE…LGSQ, and KHSP…DKPI. Residues 855–864 show a composition bias toward polar residues; the sequence is DQQVQDNENA. Composition is skewed to basic and acidic residues over residues 867 to 882 and 975 to 989; these read RCKE…EKTS and LKEH…DKPI. K167R repeat units lie at residues 994–1101, 1108–1216, 1228–1336, 1348–1450, 1461–1569, 1582–1684, 1696–1806, 1817–1925, 1937–2046, 2059–2163, 2175–2284, 2296–2405, 2419–2526, 2537–2639, 2643–2748, and 2762–2870; these read TRVL…FISP, KKIP…FQTP, SAKI…FQTP, SAKM…FQIP, KTKK…FQMP, TMLA…LFQT, KQTR…FQTP, ETTK…FQTP, VKMS…FQTP, SAKM…FQTP, SAKI…VFQT, AKLP…CQAP, KTPK…SFQE, KRIS…PIQT, and TQMP…ITQI. Residues K1013 and K1026 each participate in a glycyl lysine isopeptide (Lys-Gly) (interchain with G-Cter in SUMO2) cross-link. S1062 is modified (phosphoserine). K1082 participates in a covalent cross-link: Glycyl lysine isopeptide (Lys-Gly) (interchain with G-Cter in SUMO1); alternate. K1082 participates in a covalent cross-link: Glycyl lysine isopeptide (Lys-Gly) (interchain with G-Cter in SUMO2); alternate. Disordered stretches follow at residues 1109-1321 and 1334-1410; these read KIPS…IRAQ and QTPA…ENDC. S1114 is subject to Phosphoserine. A compositionally biased stretch (polar residues) spans 1114-1127; sequence SPHTQPVRTPASTK. At T1122 the chain carries Phosphothreonine. The residue at position 1125 (S1125) is a Phosphoserine. A Phosphothreonine modification is found at T1150. S1152 is subject to Phosphoserine. Phosphothreonine is present on residues T1159 and T1175. S1189 carries the post-translational modification Phosphoserine. T1215 is modified (phosphothreonine). S1235 bears the Phosphoserine mark. A phosphothreonine mark is found at T1243, T1279, T1295, T1307, and T1315. The segment covering 1308–1317 has biased composition (basic residues); the sequence is GHKRRPRTPK. K1317 participates in a covalent cross-link: Glycyl lysine isopeptide (Lys-Gly) (interchain with G-Cter in SUMO2). T1335 is modified (phosphothreonine). A compositionally biased stretch (polar residues) spans 1353–1368; it reads LESSQAEPVKTPASTK. A Phosphoserine modification is found at S1356. Phosphothreonine is present on T1363. The residue at position 1366 (S1366) is a Phosphoserine. The segment covering 1371-1384 has biased composition (basic and acidic residues); the sequence is SKTDLSKVDVREDP. T1400 and T1416 each carry phosphothreonine. S1469 is modified (phosphoserine). At T1477 the chain carries Phosphothreonine. Residue S1480 is modified to Phosphoserine. A Phosphothreonine modification is found at T1513. The disordered stretch occupies residues 1526-1550; sequence RKPAKRKLDSTAGMPNSKRMRCSSK. Phosphoserine is present on residues S1542 and S1587. K1609 carries the post-translational modification N6-acetyllysine. K1668 is covalently cross-linked (Glycyl lysine isopeptide (Lys-Gly) (interchain with G-Cter in SUMO2)). Residues T1684 and T1712 each carry the phosphothreonine modification. S1734 carries the post-translational modification Phosphoserine. The tract at residues 1749-1797 is disordered; the sequence is IPIGPEDDTENKGVKESTPQTLDSSASRTVSKRQQGAHEERPQFSGDLF. Over residues 1765-1782 the composition is skewed to polar residues; it reads STPQTLDSSASRTVSKRQ. T1766 is subject to Phosphothreonine. A Phosphoserine modification is found at S1779. A Phosphothreonine modification is found at T1805. At S1825 the chain carries Phosphoserine. A phosphothreonine mark is found at T1859, T1868, T1884, and T1924. Residues 1925-2033 form a disordered region; the sequence is PAGASDPVSV…QTPKIRAQPL (109 aa). S1944 is modified (phosphoserine). N6-acetyllysine is present on K1966. Phosphothreonine occurs at positions 1989, 2005, and 2025. A Glycyl lysine isopeptide (Lys-Gly) (interchain with G-Cter in SUMO1); alternate cross-link involves residue K2027. Residue K2027 forms a Glycyl lysine isopeptide (Lys-Gly) (interchain with G-Cter in SUMO2); alternate linkage. A Phosphothreonine modification is found at T2045. The tract at residues 2047-2112 is disordered; the sequence is AGANDSVTVE…SPGTPAPVQE (66 aa). The span at 2063-2078 shows a compositional bias: polar residues; sequence LESSQAEPVKTPASTK. Position 2065 is a phosphoserine (S2065). A Phosphothreonine modification is found at T2073. Phosphoserine occurs at positions 2076, 2095, and 2103. The span at 2088–2101 shows a compositional bias: basic and acidic residues; sequence VDVREDPSILEKKT. A phosphothreonine mark is found at T2106 and T2122. The interval 2124–2343 is disordered; that stretch reads KQKLDFTGNS…PLSKSSCASQ (220 aa). Basic residues predominate over residues 2135–2144; sequence GHKRRPRTPK. At T2162 the chain carries Phosphothreonine. A compositionally biased stretch (polar residues) spans 2180–2195; that stretch reads LESSQAKPVKTPASTK. S2182 is modified (phosphoserine). T2190 carries the phosphothreonine modification. S2198 carries the post-translational modification Phosphoserine. The residue at position 2218 (T2218) is a Phosphothreonine. At S2220 the chain carries Phosphoserine. Phosphothreonine is present on residues T2227, T2243, and T2283. Residue S2303 is modified to Phosphoserine. Residues T2311 and T2348 each carry the phosphothreonine modification. Residues 2378 to 2390 are compositionally biased toward basic residues; sequence RGKRQQRSCKKRS. The tract at residues 2378-2447 is disordered; sequence RGKRQQRSCK…RRQARTGLRK (70 aa). Residues S2390 and S2392 each carry the phosphoserine modification. At T2405 the chain carries Phosphothreonine. A phosphoserine mark is found at S2423 and S2425. K2451 is covalently cross-linked (Glycyl lysine isopeptide (Lys-Gly) (interchain with G-Cter in SUMO1)). Residues S2464, S2487, S2545, and S2592 each carry the phosphoserine modification. The span at 2538 to 2547 shows a compositional bias: basic and acidic residues; the sequence is TPKMPDKSPE. 2 disordered regions span residues 2538-2828 and 2879-3160; these read TPKM…QVSK and HDTS…DAKT. Positions 2605–2622 are enriched in polar residues; the sequence is VQKQDPSVSLTGRRNQPR. The residue at position 2649 (S2649) is a Phosphoserine. 2 stretches are compositionally biased toward basic and acidic residues: residues 2673 to 2697 and 2704 to 2714; these read GVKE…KEPV and EEVKKSTKQKI. K2675 participates in a covalent cross-link: Glycyl lysine isopeptide (Lys-Gly) (interchain with G-Cter in SUMO1); alternate. K2675 participates in a covalent cross-link: Glycyl lysine isopeptide (Lys-Gly) (interchain with G-Cter in SUMO2); alternate. Composition is skewed to polar residues over residues 2764–2781 and 2883–2892; these read MPCN…QSSP and ILKSTQQQKP. S2768 and S2780 each carry phosphoserine. Over residues 2907 to 2923 the composition is skewed to basic and acidic residues; it reads ASKEDPKEVLVDTRDHA. A Glycyl lysine isopeptide (Lys-Gly) (interchain with G-Cter in SUMO2) cross-link involves residue K2909. K2928 is modified (N6-acetyllysine). The span at 2959–2971 shows a compositional bias: basic and acidic residues; it reads EATDEKPVPEKKR. Residue 2973–2980 participates in ATP binding; that stretch reads ASSKRHVS. A Phosphoserine modification is found at S2980. The segment covering 3008–3018 has biased composition (basic and acidic residues); sequence KTEEMEAKREN. T3021 is subject to Phosphothreonine. Residues 3039–3057 are compositionally biased toward basic and acidic residues; that stretch reads PKFDASAENVGIKKNEKTM. Residues 3058-3067 are compositionally biased toward polar residues; that stretch reads KTASQETELQ. S3061 is modified (phosphoserine). Composition is skewed to basic and acidic residues over residues 3118–3132 and 3140–3160; these read PQEE…DVRC and VALD…DAKT.

As to quaternary structure, interacts with KIF15. Interacts (via the FHA domain) with NIFK. Interacts with PPP1CC. Component of a complex at least composed of ZNF335, HCFC1, CCAR2, EMSY, MKI67, RBBP5, ASH2L and WDR5; the complex is formed as a result of interactions between components of a nuclear receptor-mediated transcription complex and a histone methylation complex. Interacts with ZNF335. In terms of processing, hyperphosphorylated by CDK1 in mitosis; hyperphosphorylatiom prevents undergoing liquid-liquid phase separation. Dephosphorylated by PPP1CC at the onset of anaphase. Dephosphorylation by protein phosphatase 2A (PP2A) and simultaneous exposure of the positively charged patch (CP) during mitotic exit induce the RNA-dependent formation of a liquid-like condensed phase on the chromosome surface. Post-translationally, ubiquitinated by the APC/C complex after neuronal progenitors exit mitosis during brain development, leading to clearance from constitutive heterochromatin. Mainly present in proliferating cells (at protein level).

Its subcellular location is the chromosome. It localises to the nucleus. The protein localises to the nucleolus. In terms of biological role, protein that associates with the surface of mitotic chromosomes and acts both as a chromosome repellent during early mitosis and chromosome attractant during late mitosis. Required to maintain individual mitotic chromosomes dispersed in the cytoplasm following nuclear envelope disassembly. During early mitosis, relocalizes from nucleoli to the chromosome surface where it forms extended brush structures that cover a substantial fraction of the chromosome surface. The MKI67 brush structure prevents chromosomes from collapsing into a single chromatin mass by forming a steric and electrostatic charge barrier: the protein has a high net electrical charge and acts as a surfactant, dispersing chromosomes and enabling independent chromosome motility. During mitotic anaphase, the MKI67 brush structure collapses and MKI67 switches from a chromosome repellent to a chromosome attractant to promote chromosome clustering and facilitate the exclusion of large cytoplasmic particles from the future nuclear space. Mechanistically, dephosphorylation during mitotic exit and simultaneous exposure of a conserved basic patch induce the RNA-dependent formation of a liquid-like condensed phase on the chromosome surface, promoting coalescence of neighboring chromosome surfaces and clustering of chromosomes. Binds premature ribosomal RNAs during anaphase; promoting liquid-liquid phase separation. Binds DNA, with a preference for supercoiled DNA and AT-rich DNA. Does not contribute to the internal structure of mitotic chromosomes. May play a role in chromatin organization; it is however unclear whether it plays a direct role in chromatin organization or whether it is an indirect consequence of its function in mitotic chromosome. This Mus musculus (Mouse) protein is Proliferation marker protein Ki-67.